A 65-amino-acid polypeptide reads, in one-letter code: Large ribosomal subunit protein bL33 (65 aa).

A disordered region spans residues Val20–Arg40.

Belongs to the bacterial ribosomal protein bL33 family.

The sequence is that of Large ribosomal subunit protein bL33 from Prochlorococcus marinus (strain MIT 9211).